The primary structure comprises 346 residues: Zinc-type alcohol dehydrogenase-like protein C1773.06c (346 aa).

It belongs to the zinc-containing alcohol dehydrogenase family. Quinone oxidoreductase subfamily.

It localises to the cytoplasm. This is Zinc-type alcohol dehydrogenase-like protein C1773.06c from Schizosaccharomyces pombe (strain 972 / ATCC 24843) (Fission yeast).